A 347-amino-acid polypeptide reads, in one-letter code: Isocitrate dehydrogenase [NAD] subunit alpha, mitochondrial (347 aa).

A mitochondrion-targeting transit peptide spans 1–8; it reads QKQVTRGF. Residue 14–42 participates in NAD(+) binding; that stretch reads TVTLIPGDGIGPEISAAVMKIFDAAKAPI. Lysine 58 is modified (N6-succinyllysine). Residue threonine 82 is modified to Phosphothreonine. Residues arginine 96, arginine 106, and arginine 127 each contribute to the substrate site. At lysine 204 the chain carries N6-acetyllysine. The Mg(2+) site is built by aspartate 214, aspartate 238, and aspartate 242. At lysine 324 the chain carries N6-acetyllysine; alternate. Position 324 is an N6-succinyllysine; alternate (lysine 324). Lysine 331 carries the N6-succinyllysine modification.

This sequence belongs to the isocitrate and isopropylmalate dehydrogenases family. As to quaternary structure, heterooligomer of subunits alpha (IDH3A), beta (IDH3B), and gamma (IDH3G) in the apparent ratio of 2:1:1. The heterodimer containing one IDH3A and one IDH3B subunit and the heterodimer containing one IDH3A and one IDH3G subunit assemble into a heterotetramer (which contains two subunits of IDH3A, one of IDH3B and one of IDH3G) and further into the heterooctamer. The cofactor is Mg(2+). Requires Mn(2+) as cofactor.

It is found in the mitochondrion. It catalyses the reaction D-threo-isocitrate + NAD(+) = 2-oxoglutarate + CO2 + NADH. The heterotetramer and the heterodimer composed of IDH3A and IDH3G subunits can be allosterically activated by citrate (CIT) or/and ADP, and the two activators can act independently or synergistically. The heterodimer composed of IDH3A and IDH3B subunits cannot be allosterically regulated and the allosteric regulation of the heterotetramer is through the IDH3G subunit and not the IDH3B subunit. The IDH3G subunit contains the allosteric site which consists of a CIT-binding site and an ADP-binding site, and the binding of CIT and ADP causes conformational changes at the allosteric site which are transmitted to the active site in the catalytic subunit (IDH3A) through a cascade of conformational changes at the heterodimer interface, leading to stabilization of the isocitrate-binding at the active site and thus activation of the enzyme. ATP can activate the heterotetramer and the heterodimer composed of IDH3A and IDH3G subunits at low concentrations but inhibits their activities at high concentrations, whereas ATP exhibits only inhibitory effect on the heterodimer composed of IDH3A and IDH3B subunits. Its function is as follows. Catalytic subunit of the enzyme which catalyzes the decarboxylation of isocitrate (ICT) into alpha-ketoglutarate. The heterodimer composed of the alpha (IDH3A) and beta (IDH3B) subunits and the heterodimer composed of the alpha (IDH3A) and gamma (IDH3G) subunits, have considerable basal activity but the full activity of the heterotetramer (containing two subunits of IDH3A, one of IDH3B and one of IDH3G) requires the assembly and cooperative function of both heterodimers. In Macaca fascicularis (Crab-eating macaque), this protein is Isocitrate dehydrogenase [NAD] subunit alpha, mitochondrial (IDH3A).